A 332-amino-acid polypeptide reads, in one-letter code: Homoserine kinase (332 aa).

It belongs to the pseudomonas-type ThrB family.

The catalysed reaction is L-homoserine + ATP = O-phospho-L-homoserine + ADP + H(+). Its pathway is amino-acid biosynthesis; L-threonine biosynthesis; L-threonine from L-aspartate: step 4/5. This chain is Homoserine kinase, found in Burkholderia multivorans (strain ATCC 17616 / 249).